The following is a 270-amino-acid chain: Protoheme IX farnesyltransferase (270 aa).

The next 7 helical transmembrane spans lie at 13-30 (LALL…LVPD), 33-53 (HATL…GSAL), 95-115 (LLVL…ALAW), 129-149 (LALA…WTLA), 156-176 (YRII…FWLF), 207-227 (LWLG…LMAP), and 249-269 (EATL…ALLL).

This sequence belongs to the UbiA prenyltransferase family. Protoheme IX farnesyltransferase subfamily.

The protein resides in the cell inner membrane. The enzyme catalyses heme b + (2E,6E)-farnesyl diphosphate + H2O = Fe(II)-heme o + diphosphate. Its pathway is porphyrin-containing compound metabolism; heme O biosynthesis; heme O from protoheme: step 1/1. In terms of biological role, converts heme B (protoheme IX) to heme O by substitution of the vinyl group on carbon 2 of heme B porphyrin ring with a hydroxyethyl farnesyl side group. The polypeptide is Protoheme IX farnesyltransferase (Geobacter sulfurreducens (strain ATCC 51573 / DSM 12127 / PCA)).